The sequence spans 157 residues: Ribosomal RNA large subunit methyltransferase H (157 aa).

Residues Leu73, Gly105, and 124-129 (MSKMTF) each bind S-adenosyl-L-methionine.

Belongs to the RNA methyltransferase RlmH family. As to quaternary structure, homodimer.

It localises to the cytoplasm. It carries out the reaction pseudouridine(1915) in 23S rRNA + S-adenosyl-L-methionine = N(3)-methylpseudouridine(1915) in 23S rRNA + S-adenosyl-L-homocysteine + H(+). Specifically methylates the pseudouridine at position 1915 (m3Psi1915) in 23S rRNA. The protein is Ribosomal RNA large subunit methyltransferase H of Bacteroides thetaiotaomicron (strain ATCC 29148 / DSM 2079 / JCM 5827 / CCUG 10774 / NCTC 10582 / VPI-5482 / E50).